A 147-amino-acid chain; its full sequence is UPF0260 protein CJA_2436 (147 aa).

It belongs to the UPF0260 family.

The sequence is that of UPF0260 protein CJA_2436 from Cellvibrio japonicus (strain Ueda107) (Pseudomonas fluorescens subsp. cellulosa).